A 937-amino-acid chain; its full sequence is Lysosomal alpha-glucosidase (937 aa).

Residues 1-23 form the signal peptide; that stretch reads MMRWPPCSRPLLGVCTLLSLALL. A propeptide spanning residues 24–60 is cleaved from the precursor; that stretch reads GHILLHDLEVVPRELRGFSQDEIHQACQPGASSPECR. In terms of domain architecture, P-type spans 68–118; it reads TQCDLPPNSRFDCAPDKGITPQQCEARGCCYMPAEWPPDAQMGQPWCFFPP. Disulfide bonds link C70–C97, C80–C96, and C91–C114. N127, N220, N259, and N377 each carry an N-linked (GlcNAc...) asparagine glycan. A substrate-binding site is contributed by D391. Residue N457 is glycosylated (N-linked (GlcNAc...) asparagine). Residue D505 is the Nucleophile of the active site. The active site involves E508. A disulfide bond links C520 and C545. Positions 587 and 603 each coordinate substrate. Residues C634 and C645 are joined by a disulfide bond. N639 is a glycosylation site (N-linked (GlcNAc...) asparagine). H661 provides a ligand contact to substrate. 3 N-linked (GlcNAc...) asparagine glycosylation sites follow: N867, N888, and N910.

The protein belongs to the glycosyl hydrolase 31 family.

It is found in the lysosome. It localises to the lysosome membrane. The enzyme catalyses Hydrolysis of terminal, non-reducing (1-&gt;4)-linked alpha-D-glucose residues with release of alpha-D-glucose.. Its function is as follows. Essential for the degradation of glycogen in lysosomes. Has highest activity on alpha-1,4-linked glycosidic linkages, but can also hydrolyze alpha-1,6-linked glucans. This is Lysosomal alpha-glucosidase (GAA) from Bos taurus (Bovine).